The chain runs to 409 residues: MSKKKVVLAYSGGLDTSVAIKWLSDKGYDVIAVGLDVGEGKDLEFVKEKALKVGAIESYTIDAKKEFAEEFVLPALQAHALYEQKYPLVSALSRPLISKKLVEIAEQTGAQAVAHGCTGKGNDQVRFEVSIQALNPNLEVLAPVREWAWSRDEEIEYAKKNNIPIPIDLDNPYSVDQNLWGRSNECGILEDPWATPPEGAYELTVAIEDAPDQPEIVEIGFEKGIPVTLNGKSYPVHELILELNQIAGKHGVGRIDHVENRLVGIKSREVYECPGAMTLIKAHKELEDLTLTKEVAHFKPVVEKKIAELIYEGLWFSPLQPALSAFLKETQSTVTGVVRVKLFKGHAIVEGRKSEYSLYNEKLATYTPDDEFDHNAAVGFISLWGLPTKVYSMVNKEMKEKQEKKEVTS.

9–17 is a binding site for ATP; that stretch reads AYSGGLDTS. Y86 provides a ligand contact to L-citrulline. Position 116 (G116) interacts with ATP. 3 residues coordinate L-aspartate: T118, N122, and D123. N122 serves as a coordination point for L-citrulline. The L-citrulline site is built by R126, S174, S183, E259, and Y271.

This sequence belongs to the argininosuccinate synthase family. Type 1 subfamily. Homotetramer.

The protein resides in the cytoplasm. The catalysed reaction is L-citrulline + L-aspartate + ATP = 2-(N(omega)-L-arginino)succinate + AMP + diphosphate + H(+). It participates in amino-acid biosynthesis; L-arginine biosynthesis; L-arginine from L-ornithine and carbamoyl phosphate: step 2/3. In Halalkalibacterium halodurans (strain ATCC BAA-125 / DSM 18197 / FERM 7344 / JCM 9153 / C-125) (Bacillus halodurans), this protein is Argininosuccinate synthase.